The chain runs to 336 residues: HTH-type transcriptional repressor PurR (336 aa).

Residues 2–56 (ATIKDVAKMAGVSTTTVSHVINKTRFVAKDTEEAVLSAIKQLNYSPSAVARSLKV) form the HTH lacI-type domain. The H-T-H motif DNA-binding region spans 4 to 23 (IKDVAKMAGVSTTTVSHVIN). A DNA-binding region spans residues 48 to 56 (SAVARSLKV). Hypoxanthine-binding residues include tyrosine 73, lysine 188, threonine 190, phenylalanine 219, and aspartate 273.

Homodimer.

Its pathway is purine metabolism; purine nucleotide biosynthesis [regulation]. Functionally, is the main repressor of the genes involved in the de novo synthesis of purine nucleotides, regulating purB, purC, purEK, purF, purHD, purL, purMN and guaBA expression. PurR is allosterically activated to bind its cognate DNA by binding the purine corepressors, hypoxanthine or guanine, thereby effecting transcription repression. The protein is HTH-type transcriptional repressor PurR of Haemophilus influenzae (strain 86-028NP).